The sequence spans 398 residues: Bifunctional enzyme IspD/IspF (398 aa).

The 2-C-methyl-D-erythritol 4-phosphate cytidylyltransferase stretch occupies residues 1–234 (MANSRRTAAI…SRLAALLGDI (234 aa)). The interval 235–398 (RTGTGYDVHA…LPWGPNGLSG (164 aa)) is 2-C-methyl-D-erythritol 2,4-cyclodiphosphate synthase. The a divalent metal cation site is built by Asp-241 and His-243. Residues 241–243 (DVH) and 267–268 (HS) each bind 4-CDP-2-C-methyl-D-erythritol 2-phosphate. His-275 is an a divalent metal cation binding site. Residues 289–291 (DIG), 365–368 (TTSE), Phe-372, and Arg-375 contribute to the 4-CDP-2-C-methyl-D-erythritol 2-phosphate site.

The protein in the N-terminal section; belongs to the IspD/TarI cytidylyltransferase family. IspD subfamily. This sequence in the C-terminal section; belongs to the IspF family. It depends on a divalent metal cation as a cofactor.

It catalyses the reaction 2-C-methyl-D-erythritol 4-phosphate + CTP + H(+) = 4-CDP-2-C-methyl-D-erythritol + diphosphate. The catalysed reaction is 4-CDP-2-C-methyl-D-erythritol 2-phosphate = 2-C-methyl-D-erythritol 2,4-cyclic diphosphate + CMP. It functions in the pathway isoprenoid biosynthesis; isopentenyl diphosphate biosynthesis via DXP pathway; isopentenyl diphosphate from 1-deoxy-D-xylulose 5-phosphate: step 2/6. Its pathway is isoprenoid biosynthesis; isopentenyl diphosphate biosynthesis via DXP pathway; isopentenyl diphosphate from 1-deoxy-D-xylulose 5-phosphate: step 4/6. In terms of biological role, bifunctional enzyme that catalyzes the formation of 4-diphosphocytidyl-2-C-methyl-D-erythritol from CTP and 2-C-methyl-D-erythritol 4-phosphate (MEP) (IspD), and catalyzes the conversion of 4-diphosphocytidyl-2-C-methyl-D-erythritol 2-phosphate (CDP-ME2P) to 2-C-methyl-D-erythritol 2,4-cyclodiphosphate (ME-CPP) with a corresponding release of cytidine 5-monophosphate (CMP) (IspF). This Rhodopseudomonas palustris (strain BisA53) protein is Bifunctional enzyme IspD/IspF.